Here is a 475-residue protein sequence, read N- to C-terminus: Lipid II flippase MurJ (475 aa).

Residues 1–2 (MS) are Cytoplasmic-facing. A helical transmembrane segment spans residues 3–23 (ILFSSILFSIATFFSRILGLF). Over 24 to 35 (RDVLFAKYFGVS) the chain is Periplasmic. The chain crosses the membrane as a helical span at residues 36 to 56 (YELDAYFIAIMFPFFLRKVFG). Residues 57-78 (EGAMSSAFVPLYSEKSGEEKDK) are Cytoplasmic-facing. Residues 79 to 99 (FLSSVINGFSLIILALVILSY) form a helical membrane-spanning segment. Over 100-123 (FFPELIINLFGAGSSHETKILAKK) the chain is Periplasmic. Residues 124 to 144 (LLLITSPSIYFIFLWAISYSI) form a helical membrane-spanning segment. Topologically, residues 145–150 (LNTNNK) are cytoplasmic. The helical transmembrane segment at 151 to 171 (FFWPALTPSISNITIIIGTFL) threads the bilayer. Topologically, residues 172–175 (STKY) are periplasmic. Residues 176–196 (GIISPTIGFLIGSILMFFSII) traverse the membrane as a helical segment. Residues 197-213 (KSIIKHKYYFTIKHFPH) lie on the Cytoplasmic side of the membrane. The chain crosses the membrane as a helical span at residues 214-238 (FLKLFFPTFMTMVVSQINTVVDMNV). Residues 239-249 (VSFYDKGSISY) lie on the Periplasmic side of the membrane. Residues 250-271 (LQYASRFYLLPYGLFAVSVSTV) traverse the membrane as a helical segment. The Cytoplasmic portion of the chain corresponds to 272 to 287 (VLSKISNDRKNFNYHL). The helical transmembrane segment at 288–308 (NDALKTTLFFTIPSMVGLIFL) threads the bilayer. Residues 309 to 332 (STPIIRFFYEHGAFTSKDTLITSK) lie on the Periplasmic side of the membrane. A helical transmembrane segment spans residues 333-353 (ILIAYTLGLPFYGIYSTISRS). Residues 354–362 (YHAIKNTKT) are Cytoplasmic-facing. The chain crosses the membrane as a helical span at residues 363–383 (PFIAATIVSLSNIILDIIFGL). Residues 384–386 (KYG) lie on the Periplasmic side of the membrane. Residues 387-407 (PIGVALATSIAGIIGVLYLLF) traverse the membrane as a helical segment. The Cytoplasmic portion of the chain corresponds to 408 to 416 (SVKTFPIKD). A helical membrane pass occupies residues 417 to 437 (FLKISLNSLIMLFVIYLTDFT). Over 438-440 (DNE) the chain is Periplasmic. Residues 441 to 461 (FWFLIQILIGILVYLIFSSIF) traverse the membrane as a helical segment. Over 462–475 (YRDLIRRFLYARKK) the chain is Cytoplasmic.

Belongs to the MurJ/MviN family.

The protein localises to the cell inner membrane. The protein operates within cell wall biogenesis; peptidoglycan biosynthesis. Involved in peptidoglycan biosynthesis. Transports lipid-linked peptidoglycan precursors from the inner to the outer leaflet of the cytoplasmic membrane. This chain is Lipid II flippase MurJ, found in Thermosipho africanus (strain TCF52B).